The chain runs to 441 residues: Ribulose bisphosphate carboxylase/oxygenase activase, chloroplastic (441 aa).

Residue 167–174 participates in ATP binding; it reads VWGGKGQG.

The protein belongs to the RuBisCO activase family.

It is found in the plastid. The protein resides in the chloroplast stroma. Functionally, activation of RuBisCO (ribulose-1,5-bisphosphate carboxylase/oxygenase; EC 4.1.1.39) involves the ATP-dependent carboxylation of the epsilon-amino group of lysine leading to a carbamate structure. This chain is Ribulose bisphosphate carboxylase/oxygenase activase, chloroplastic (RCA1), found in Phaseolus vulgaris (Kidney bean).